The primary structure comprises 417 residues: MDKLKIIGNGPLNGEIRVSGAKNAALPILCAGLLTADTMRFTNVPMLRDIATTQKLLQGMGVRVMTDNVHEMEITASHLDSLVAPYELVKTMRASILVLGPTLARFGEATVSLPGGCAIGSRPVDQHIKGLVAMGAEVSIEHGYVKARAKRLRGARIVMDMVTVGGTENLLMAATLAEGTTILENAAREPEVTDLANCLVAMGAKISGIGTDRLVIEGVDKLHGAEYAVMPDRIEAGTFLVAGAMTRGHVVLKNAAPKSMEAVLDKLRETGALIECGDDWISLDMKQRPKAVNFRTLPYPAFPTDMQAQLMTLNCVADGAGVVTETIFENRFMHVPELNRMGANIEVEGNTAIVKGVDKLSGATVMATDLRASASLVIAGLVAEGETIVDRIYHLDRGYEYIEKKLGAVGALIERVS.

22 to 23 (KN) contacts phosphoenolpyruvate. A UDP-N-acetyl-alpha-D-glucosamine-binding site is contributed by Arg93. The Proton donor role is filled by Cys117. Position 117 is a 2-(S-cysteinyl)pyruvic acid O-phosphothioketal (Cys117). Residues 122–126 (RPVDQ), Asp305, and Ile327 each bind UDP-N-acetyl-alpha-D-glucosamine.

The protein belongs to the EPSP synthase family. MurA subfamily.

It is found in the cytoplasm. It carries out the reaction phosphoenolpyruvate + UDP-N-acetyl-alpha-D-glucosamine = UDP-N-acetyl-3-O-(1-carboxyvinyl)-alpha-D-glucosamine + phosphate. Its pathway is cell wall biogenesis; peptidoglycan biosynthesis. Functionally, cell wall formation. Adds enolpyruvyl to UDP-N-acetylglucosamine. This Chromobacterium violaceum (strain ATCC 12472 / DSM 30191 / JCM 1249 / CCUG 213 / NBRC 12614 / NCIMB 9131 / NCTC 9757 / MK) protein is UDP-N-acetylglucosamine 1-carboxyvinyltransferase.